A 57-amino-acid polypeptide reads, in one-letter code: UPF0391 membrane protein RB0084 (57 aa).

2 helical membrane passes run 4–24 and 33–53; these read WALI…SGVS and ILFY…LAVG.

This sequence belongs to the UPF0391 family.

It localises to the cell membrane. This is UPF0391 membrane protein RB0084 from Rhizobium meliloti (strain 1021) (Ensifer meliloti).